Consider the following 215-residue polypeptide: Elongation factor Ts (215 aa).

Positions 80–83 are involved in Mg(2+) ion dislocation from EF-Tu; the sequence is TDFV.

It belongs to the EF-Ts family.

Its subcellular location is the cytoplasm. Its function is as follows. Associates with the EF-Tu.GDP complex and induces the exchange of GDP to GTP. It remains bound to the aminoacyl-tRNA.EF-Tu.GTP complex up to the GTP hydrolysis stage on the ribosome. In Heliobacterium modesticaldum (strain ATCC 51547 / Ice1), this protein is Elongation factor Ts.